Consider the following 332-residue polypeptide: Phenylalanine--tRNA ligase alpha subunit (332 aa).

Glutamate 254 is a Mg(2+) binding site.

It belongs to the class-II aminoacyl-tRNA synthetase family. Phe-tRNA synthetase alpha subunit type 1 subfamily. In terms of assembly, tetramer of two alpha and two beta subunits. Mg(2+) serves as cofactor.

The protein resides in the cytoplasm. It carries out the reaction tRNA(Phe) + L-phenylalanine + ATP = L-phenylalanyl-tRNA(Phe) + AMP + diphosphate + H(+). This is Phenylalanine--tRNA ligase alpha subunit from Hydrogenovibrio crunogenus (strain DSM 25203 / XCL-2) (Thiomicrospira crunogena).